Consider the following 170-residue polypeptide: MSGVKFNIGKIVNTHGIRGEVKVVRITDFEDRFDPGNTVYLQDNKEYKPLVIATHRVHKGFDLLQFKGYGNINEVEAFKGLMLSIDEDQLTDLEEDAYYYHEIVGCKVVTSEGEELGKVKEILSPGANDVWVVQRMNAKDLLIPYIEQVVKQVDIENKIIKVQLMEGMLD.

The region spanning 95–168 is the PRC barrel domain; the sequence is EDAYYYHEIV…IIKVQLMEGM (74 aa).

The protein belongs to the RimM family. Binds ribosomal protein uS19.

Its subcellular location is the cytoplasm. Functionally, an accessory protein needed during the final step in the assembly of 30S ribosomal subunit, possibly for assembly of the head region. Essential for efficient processing of 16S rRNA. May be needed both before and after RbfA during the maturation of 16S rRNA. It has affinity for free ribosomal 30S subunits but not for 70S ribosomes. The polypeptide is Ribosome maturation factor RimM (Oceanobacillus iheyensis (strain DSM 14371 / CIP 107618 / JCM 11309 / KCTC 3954 / HTE831)).